Consider the following 123-residue polypeptide: Protein Rev (123 aa).

A phosphoserine; by host CK2 mark is found at S5 and S8. Residues 18-26 (IIKILYQSN) form a homomultimerization region. 2 disordered regions span residues 24–49 (QSNPYPSPEGSRQARRNRRRRWRARQ) and 82–123 (TLDS…GAKN). The Nuclear localization signal and RNA-binding (RRE) signature appears at 34–50 (SRQARRNRRRRWRARQR). Over residues 36 to 49 (QARRNRRRRWRARQ) the composition is skewed to basic residues. Residues 73–84 (LPLPPIERLTLD) carry the Nuclear export signal and binding to XPO1 motif. A compositionally biased stretch (polar residues) spans 97–112 (PQGTETGTGSPNTPEG).

The protein belongs to the HIV-1 REV protein family. In terms of assembly, homomultimer; when bound to the RRE. Multimeric assembly is essential for activity and may involve XPO1. Binds to human KPNB1, XPO1, TNPO1, RANBP5 and IPO7. Interacts with the viral Integrase. Interacts with human KHDRBS1. Interacts with human NAP1; this interaction decreases Rev multimerization and stimulates its activity. Interacts with human DEAD-box helicases DDX3 and DDX24; these interactions may serve for viral RNA export to the cytoplasm and packaging, respectively. Interacts with human PSIP1; this interaction may inhibit HIV-1 DNA integration by promoting dissociation of the Integrase-LEDGF/p75 complex. In terms of processing, asymmetrically arginine dimethylated at one site by host PRMT6. Methylation impairs the RNA-binding activity and export of viral RNA from the nucleus to the cytoplasm. Phosphorylated by protein kinase CK2. Presence of, and maybe binding to the N-terminus of the regulatory beta subunit of CK2 is necessary for CK2-mediated Rev's phosphorylation.

Its subcellular location is the host nucleus. It localises to the host nucleolus. The protein resides in the host cytoplasm. In terms of biological role, escorts unspliced or incompletely spliced viral pre-mRNAs (late transcripts) out of the nucleus of infected cells. These pre-mRNAs carry a recognition sequence called Rev responsive element (RRE) located in the env gene, that is not present in fully spliced viral mRNAs (early transcripts). This function is essential since most viral proteins are translated from unspliced or partially spliced pre-mRNAs which cannot exit the nucleus by the pathway used by fully processed cellular mRNAs. Rev itself is translated from a fully spliced mRNA that readily exits the nucleus. Rev's nuclear localization signal (NLS) binds directly to KPNB1/Importin beta-1 without previous binding to KPNA1/Importin alpha-1. KPNB1 binds to the GDP bound form of RAN (Ran-GDP) and targets Rev to the nucleus. In the nucleus, the conversion from Ran-GDP to Ran-GTP dissociates Rev from KPNB1 and allows Rev's binding to the RRE in viral pre-mRNAs. Rev multimerization on the RRE via cooperative assembly exposes its nuclear export signal (NES) to the surface. Rev can then form a complex with XPO1/CRM1 and Ran-GTP, leading to nuclear export of the complex. Conversion from Ran-GTP to Ran-GDP mediates dissociation of the Rev/RRE/XPO1/RAN complex, so that Rev can return to the nucleus for a subsequent round of export. Beside KPNB1, also seems to interact with TNPO1/Transportin-1, RANBP5/IPO5 and IPO7/RANBP7 for nuclear import. The nucleoporin-like HRB/RIP is an essential cofactor that probably indirectly interacts with Rev to release HIV RNAs from the perinuclear region to the cytoplasm. The polypeptide is Protein Rev (Simian immunodeficiency virus (isolate MB66) (SIV-cpz)).